The sequence spans 645 residues: DNA mismatch repair protein MutL (645 aa).

It belongs to the DNA mismatch repair MutL/HexB family.

Its function is as follows. This protein is involved in the repair of mismatches in DNA. It is required for dam-dependent methyl-directed DNA mismatch repair. May act as a 'molecular matchmaker', a protein that promotes the formation of a stable complex between two or more DNA-binding proteins in an ATP-dependent manner without itself being part of a final effector complex. This is DNA mismatch repair protein MutL from Geobacillus thermodenitrificans (strain NG80-2).